The chain runs to 482 residues: tRNA sulfurtransferase (482 aa).

Residues 61–165 enclose the THUMP domain; it reads LAIRDALTRI…DDRLLLIKGR (105 aa). ATP-binding positions include 183 to 184, Lys-265, Gly-287, and Gln-296; that span reads LI. An intrachain disulfide couples Cys-344 to Cys-456. Residues 404–482 enclose the Rhodanese domain; it reads FGPNDVILDI…GFENVKVYRP (79 aa). Cys-456 functions as the Cysteine persulfide intermediate in the catalytic mechanism.

The protein belongs to the ThiI family.

The protein localises to the cytoplasm. It catalyses the reaction [ThiI sulfur-carrier protein]-S-sulfanyl-L-cysteine + a uridine in tRNA + 2 reduced [2Fe-2S]-[ferredoxin] + ATP + H(+) = [ThiI sulfur-carrier protein]-L-cysteine + a 4-thiouridine in tRNA + 2 oxidized [2Fe-2S]-[ferredoxin] + AMP + diphosphate. The enzyme catalyses [ThiS sulfur-carrier protein]-C-terminal Gly-Gly-AMP + S-sulfanyl-L-cysteinyl-[cysteine desulfurase] + AH2 = [ThiS sulfur-carrier protein]-C-terminal-Gly-aminoethanethioate + L-cysteinyl-[cysteine desulfurase] + A + AMP + 2 H(+). Its pathway is cofactor biosynthesis; thiamine diphosphate biosynthesis. In terms of biological role, catalyzes the ATP-dependent transfer of a sulfur to tRNA to produce 4-thiouridine in position 8 of tRNAs, which functions as a near-UV photosensor. Also catalyzes the transfer of sulfur to the sulfur carrier protein ThiS, forming ThiS-thiocarboxylate. This is a step in the synthesis of thiazole, in the thiamine biosynthesis pathway. The sulfur is donated as persulfide by IscS. This is tRNA sulfurtransferase from Salmonella enteritidis PT4 (strain P125109).